Here is a 253-residue protein sequence, read N- to C-terminus: 4-hydroxy-tetrahydrodipicolinate reductase (253 aa).

NAD(+) is bound by residues 8 to 13, Asp34, 76 to 78, and 108 to 111; these read GAKGRM, GTT, and APNF. His138 (proton donor/acceptor) is an active-site residue. (S)-2,3,4,5-tetrahydrodipicolinate is bound at residue His139. Lys142 functions as the Proton donor in the catalytic mechanism. Position 148–149 (148–149) interacts with (S)-2,3,4,5-tetrahydrodipicolinate; the sequence is GT.

Belongs to the DapB family.

It is found in the cytoplasm. The enzyme catalyses (S)-2,3,4,5-tetrahydrodipicolinate + NAD(+) + H2O = (2S,4S)-4-hydroxy-2,3,4,5-tetrahydrodipicolinate + NADH + H(+). It carries out the reaction (S)-2,3,4,5-tetrahydrodipicolinate + NADP(+) + H2O = (2S,4S)-4-hydroxy-2,3,4,5-tetrahydrodipicolinate + NADPH + H(+). The protein operates within amino-acid biosynthesis; L-lysine biosynthesis via DAP pathway; (S)-tetrahydrodipicolinate from L-aspartate: step 4/4. In terms of biological role, catalyzes the conversion of 4-hydroxy-tetrahydrodipicolinate (HTPA) to tetrahydrodipicolinate. The polypeptide is 4-hydroxy-tetrahydrodipicolinate reductase (Bifidobacterium animalis subsp. lactis (strain AD011)).